The sequence spans 439 residues: Xaa-Pro dipeptidase (439 aa).

Mn(2+) is bound by residues D244, D255, H335, E380, and E418.

The protein belongs to the peptidase M24B family. Bacterial-type prolidase subfamily. Requires Mn(2+) as cofactor.

It catalyses the reaction Xaa-L-Pro dipeptide + H2O = an L-alpha-amino acid + L-proline. Functionally, splits dipeptides with a prolyl residue in the C-terminal position. This is Xaa-Pro dipeptidase from Shewanella frigidimarina (strain NCIMB 400).